The primary structure comprises 908 residues: Oxysterol-binding protein 2 (908 aa).

Positions Ser-42–Thr-112 are disordered. The span at Glu-81–Pro-90 shows a compositional bias: polar residues. One can recognise a PH domain in the interval Leu-179–Ala-271. Disordered stretches follow at residues Thr-279–Glu-299, Arg-413–Asp-445, and Leu-822–Arg-843. Ser-284 carries the phosphoserine modification. Residues Ser-424–Ser-437 are compositionally biased toward low complexity.

This sequence belongs to the OSBP family. As to quaternary structure, interacts with CCDC159. In terms of tissue distribution, expressed in the testis (at protein level). Expressed in postmeiotic germ cells of the testis.

The protein resides in the membrane. Its subcellular location is the cytoplasmic vesicle. It is found in the secretory vesicle. The protein localises to the acrosome. Binds 7-ketocholesterol. Acts during spermatid development where its function is required prior to the removal of cytoplasm from the sperm head. The chain is Oxysterol-binding protein 2 (Osbp2) from Mus musculus (Mouse).